Consider the following 54-residue polypeptide: uncharacterized protein (54 aa).

2 stretches are compositionally biased toward basic and acidic residues: residues 1–19 and 26–54; these read MTEKKQQNKPNENPEHNDL and EELKENMNDEKHKRQQRDNSQSERDYDTK. The interval 1–54 is disordered; it reads MTEKKQQNKPNENPEHNDLTDPIPNEELKENMNDEKHKRQQRDNSQSERDYDTK.

This is an uncharacterized protein from Bacillus subtilis (strain 168).